The chain runs to 1673 residues: Glutamine and serine-rich protein 1 (1673 aa).

Disordered regions lie at residues 265-322 (VIPS…SSQA), 411-543 (DQTR…KSYV), 872-892 (RHMSPNFTPPKPQNMNNLSIN), 923-961 (QDLPSGMVSPVPGANQDDHEKNSENIKNPPNVNQEPKEG), 1050-1081 (DENANLKQIKRNMPLKRSVSKGPDVPGAQYSS), 1149-1182 (VIRPPCPGPLSPQSVAGAPVSDSGSASPPKKAEE), 1216-1272 (LSAL…EQLA), and 1390-1476 (KSKV…PPPI). Residues 289–309 (SSKTPKSQSVVSPELTQSYTK) are compositionally biased toward polar residues. 2 stretches are compositionally biased toward low complexity: residues 310 to 322 (SSQNQSSVNSSQA) and 411 to 458 (DQTR…PSDS). Over residues 459-539 (YTSGQNQTLA…MQNSRTTADS (81 aa)) the composition is skewed to polar residues. The segment covering 947-956 (NIKNPPNVNQ) has biased composition (polar residues). A compositionally biased stretch (basic and acidic residues) spans 1222-1233 (NSEKRLKTEGDK). Polar residues-rich tracts occupy residues 1259–1272 (KPSQPEATQPEQLA) and 1397–1411 (ARTTHTKASGGSKVS). A compositionally biased stretch (basic and acidic residues) spans 1435–1451 (TKAEPPPKKRKQWKEEF). The segment covering 1452–1462 (SSSQSDSSPDM) has biased composition (low complexity).

The protein localises to the chromosome. In terms of biological role, plays an essential role in the protection and maintenance of transcriptional and developmental programs. Protects many bivalent promoters and poised enhancers from hypermethylation, showing a marked preference for these regulatory elements over other types of promoters or enhancers. Mechanistically, cooperates with tet1 and binds to DNA in a common complex to inhibit the binding of dnmt3a/3b and therefore de novo methylation. This chain is Glutamine and serine-rich protein 1 (qser1), found in Xenopus laevis (African clawed frog).